A 358-amino-acid chain; its full sequence is N-acylethanolamine-hydrolyzing acid amidase (358 aa).

A signal peptide spans 1–26 (MQGTGHPVRPVLELLLLLLLLAGVGG). N-linked (GlcNAc...) asparagine glycans are attached at residues Asn39 and Asn108. Catalysis depends on Cys127, which acts as the Nucleophile. N-linked (GlcNAc...) asparagine glycosylation is found at Asn310, Asn334, and Asn356.

This sequence belongs to the acid ceramidase family. As to quaternary structure, heterodimer of an alpha and a beta subunit, produced by autocatalytic cleavage. N-glycosylated. Tunicamycin treatment causes a reduction in specific activity against N-palmitoylethanolamine. Post-translationally, autoproteolytic cleavage at pH 4.5 gives rise to the alpha and beta subunit. Cleavage gives rise to a conformation change that activates the enzyme. The same catalytic Cys residue mediates the autoproteolytic cleavage and subsequent hydrolysis of lipid substrates.

The protein localises to the lysosome. It localises to the membrane. It carries out the reaction N-hexadecanoylethanolamine + H2O = ethanolamine + hexadecanoate. The catalysed reaction is an N-(long-chain fatty acyl)ethanolamine + H2O = a long-chain fatty acid + ethanolamine. The enzyme catalyses N-dodecanoylethanolamine + H2O = dodecanoate + ethanolamine. It catalyses the reaction N-tetradecanoylethanolamine + H2O = tetradecanoate + ethanolamine. It carries out the reaction an N-acylsphing-4-enine + H2O = sphing-4-enine + a fatty acid. The catalysed reaction is N-hexadecanoylsphing-4-enine + H2O = sphing-4-enine + hexadecanoate. The enzyme catalyses N-dodecanoylsphing-4-enine + H2O = dodecanoate + sphing-4-enine. Its pathway is lipid metabolism; fatty acid metabolism. Its function is as follows. Degrades bioactive fatty acid amides to their corresponding acids, with the following preference: N-palmitoylethanolamine &gt; N-myristoylethanolamine &gt; N-stearoylethanolamine &gt; N-oleoylethanolamine &gt; N-linoleoylethanolamine &gt; N-arachidonoylethanolamine. The polypeptide is N-acylethanolamine-hydrolyzing acid amidase (Oryctolagus cuniculus (Rabbit)).